A 739-amino-acid polypeptide reads, in one-letter code: DNA ligase (739 aa).

The disordered stretch occupies residues 1 to 29 (MTANRPALPTRDKAVSDLSATEASDEHAA). Residues 51–55 (DADYD), 100–101 (SL), and glutamate 134 contribute to the NAD(+) site. The N6-AMP-lysine intermediate role is filled by lysine 136. Residues arginine 157, glutamate 194, lysine 311, and lysine 335 each contribute to the NAD(+) site. Residues cysteine 440, cysteine 443, cysteine 464, and cysteine 470 each coordinate Zn(2+). Positions 592–612 (PTEMEEASEETPPTRRRKPQG) are disordered. The 78-residue stretch at 662–739 (ASTSPVSGKT…TEDEWFDLVG (78 aa)) folds into the BRCT domain.

It belongs to the NAD-dependent DNA ligase family. LigA subfamily. Mg(2+) is required as a cofactor. It depends on Mn(2+) as a cofactor.

The catalysed reaction is NAD(+) + (deoxyribonucleotide)n-3'-hydroxyl + 5'-phospho-(deoxyribonucleotide)m = (deoxyribonucleotide)n+m + AMP + beta-nicotinamide D-nucleotide.. Its function is as follows. DNA ligase that catalyzes the formation of phosphodiester linkages between 5'-phosphoryl and 3'-hydroxyl groups in double-stranded DNA using NAD as a coenzyme and as the energy source for the reaction. It is essential for DNA replication and repair of damaged DNA. This chain is DNA ligase, found in Azorhizobium caulinodans (strain ATCC 43989 / DSM 5975 / JCM 20966 / LMG 6465 / NBRC 14845 / NCIMB 13405 / ORS 571).